A 102-amino-acid polypeptide reads, in one-letter code: MRIAIVGGQNHNQETYGKLLGKTGRVEIHFYDGIPKKHNKRNLEKLIKDVDLVIVILGACSHASMWDTKKAAKKCHKEVLFSRGIGISSIVKQIAGKPAYTA.

The protein belongs to the UPF0751 family.

The sequence is that of UPF0751 protein Dhaf_1351 from Desulfitobacterium hafniense (strain DSM 10664 / DCB-2).